Here is a 332-residue protein sequence, read N- to C-terminus: Geranylgeranyl pyrophosphate synthase 2 (332 aa).

Lys-55, Arg-58, and His-87 together coordinate isopentenyl diphosphate. Mg(2+) is bound by residues Asp-94 and Asp-98. Arg-103 serves as a coordination point for dimethylallyl diphosphate. Position 104 (Arg-104) interacts with isopentenyl diphosphate. Dimethylallyl diphosphate contacts are provided by Lys-181, Thr-182, and Gln-218. Position 221 (Asp-221) interacts with Mg(2+). Dimethylallyl diphosphate is bound by residues Asn-225, Lys-235, and Lys-245.

The protein belongs to the FPP/GGPP synthase family. It depends on Mg(2+) as a cofactor.

It carries out the reaction isopentenyl diphosphate + dimethylallyl diphosphate = (2E)-geranyl diphosphate + diphosphate. The catalysed reaction is isopentenyl diphosphate + (2E)-geranyl diphosphate = (2E,6E)-farnesyl diphosphate + diphosphate. It catalyses the reaction isopentenyl diphosphate + (2E,6E)-farnesyl diphosphate = (2E,6E,10E)-geranylgeranyl diphosphate + diphosphate. Functionally, geranylgeranyl pyrophosphate synthase; part of the gene cluster 3 that mediates the biosynthesis of an isoprenoid secondary metabolite. In Zymoseptoria tritici (strain CBS 115943 / IPO323) (Speckled leaf blotch fungus), this protein is Geranylgeranyl pyrophosphate synthase 2 (GGS2).